A 252-amino-acid chain; its full sequence is Phosphate import ATP-binding protein PstB (252 aa).

Residues 5–247 enclose the ABC transporter domain; that stretch reads MRGQDVKVFY…PKEQRTQDYI (243 aa). ATP is bound at residue 37 to 44; sequence GPSGCGKS.

This sequence belongs to the ABC transporter superfamily. Phosphate importer (TC 3.A.1.7) family. As to quaternary structure, the complex is composed of two ATP-binding proteins (PstB), two transmembrane proteins (PstC and PstA) and a solute-binding protein (PstS).

The protein resides in the cell inner membrane. It carries out the reaction phosphate(out) + ATP + H2O = ADP + 2 phosphate(in) + H(+). Functionally, part of the ABC transporter complex PstSACB involved in phosphate import. Responsible for energy coupling to the transport system. The sequence is that of Phosphate import ATP-binding protein PstB from Bartonella henselae (strain ATCC 49882 / DSM 28221 / CCUG 30454 / Houston 1) (Rochalimaea henselae).